The primary structure comprises 206 residues: MKPLTPRQQQVFDLIKSKIEDTGMPPTRAEIARELGFRSANAAEEHLKALARKQAIEIIPGASRGIRILLEDAANDDQGLPLIGQVAAGEPILAQEHVESHYQVDPAMFKPKADFLLRVNGESMKDIGIMDGDLLAVHKTQDVRDGQVVVARVDDDVTVKRLERKGSTVLLHAENEEFSPIQVDLTSQHLTIEGLAVGIIRNTDWM.

The H-T-H motif DNA-binding region spans 28 to 48 (RAEIARELGFRSANAAEEHLK). Residues serine 123 and lysine 160 each act as for autocatalytic cleavage activity in the active site.

This sequence belongs to the peptidase S24 family. Homodimer.

The catalysed reaction is Hydrolysis of Ala-|-Gly bond in repressor LexA.. Represses a number of genes involved in the response to DNA damage (SOS response), including recA and lexA. In the presence of single-stranded DNA, RecA interacts with LexA causing an autocatalytic cleavage which disrupts the DNA-binding part of LexA, leading to derepression of the SOS regulon and eventually DNA repair. This is LexA repressor from Vibrio campbellii (strain ATCC BAA-1116).